Reading from the N-terminus, the 1166-residue chain is MQPATQLQFTNHLSPNGQCILQPPPTPSLPDKMEKAPPQPQHEGLKSEEHLPQQPAAAKTVSRHIPRLRAVVESQAFKNILVDEMDMMHARAATLIQANWRGYRLRQKLISQMTAAKAIQEAWRRFNKRHILHSSKLLVKKVRAEDGNIPYHAPQQVRFQHPEENCLLSPPVMVNKETQFPSYDNLVLCRPQSSPLLKPPAAQGTPEPCVQAPHAAGVRGVAFLPHQTVTIRFPCPVSLDAKCQSCLLTRTIRSTCLVHIEGDSVKTKRVTARTNKAGVPETPLSRRYDKAVMGPSRAQTQGPVEAETPKAPFQICPGPVITKTLLQTYPVVSMTLPQTYSASTTTTTPHKTSPVPKITITKTPVQMYPGPTVMTKTAPHTCPMPTMTKIQVHSTASRTGTPRQTCRATITAKHQPQVSLLASIMKSPPQVCPGPAMAKTPPQTHPVATPAKSPLQTCLAATTSNTSSQMSPVGLTKPSRQTRLAAMITKTPAQLRSVATILKTLCLASPTVANVKAPPQVAVRGSIHDNPPKAKATMNMKQAAEAVKASSPSCLAEGKIRCLAQSRLGTGAPRAPAKLPLEAEKIKTGPQKPVKADMALKTSVAVEVAGAPSWTKVAEEGDKPSHLYVPVDVAVTLPRGQPAAPLTNASSQRHPPCLSQRPLATPLTKASSQGHLPIELTKTPSLAHLVTCLSKMHSQAHLATGAMKVQSQVPLATCLTKTQSRGQPIITKRLIPAHQAADLSSNTHSQVLLTGSKVSNQACQHLSGLSAPPWAKPEDRWTQPKPHGHVPGKTTQGGPCPAACEVQGTLVPLMAPTGHSTCHVESWGDSGATRAQPSMPSQVVPCQEDTGPVDAGVASGQSWKRVWEPARGAASWETRRNKAVVHPRQSGEPMVSMQAAEEIRILAVTTIQAGVRGYLVRRRIRVWHRRATVIQATWRGYRMRRNLAHLCRATTIIQAAWRGYSTRRDQARHRQMLHPVTWVELGGGARVMSDRSWVQDGRARTVSDHRCFQSCQAKPCSVCHSLSSRIGSPPSVVMLVGSSPRTCHTCGRTQPTRVVQGMGRGAGGPGAVSRASAYQRAVPSPRQPRRRDKAATAIQSAWRGFKIRQQMRQQQMAAKMVQATWRGHHTRSCLKSTEALLGPADPWSSSQHMHWASSQHTHWPGI.

A compositionally biased stretch (polar residues) spans 1-19; sequence MQPATQLQFTNHLSPNGQC. Positions 1-56 are disordered; it reads MQPATQLQFTNHLSPNGQCILQPPPTPSLPDKMEKAPPQPQHEGLKSEEHLPQQPA. Residues 89–118 enclose the IQ 1 domain; that stretch reads HARAATLIQANWRGYRLRQKLISQMTAAKA. Disordered regions lie at residues 431-450, 769-797, and 829-848; these read VCPGPAMAKTPPQTHPVATP, LSAPPWAKPEDRWTQPKPHGHVPGKTTQG, and DSGATRAQPSMPSQVVPCQE. IQ domains are found at residues 907 to 932, 928 to 955, 952 to 979, 1091 to 1119, and 1114 to 1143; these read AVTTIQAGVRGYLVRRRIRVWHRRAT, HRRATVIQATWRGYRMRRNLAHLCRATT, RATTIIQAAWRGYSTRRDQARHRQMLHP, RDKAATAIQSAWRGFKIRQQMRQQQMAAK, and QQMAAKMVQATWRGHHTRSCLKSTEALLGP. The interval 1145 to 1166 is disordered; sequence DPWSSSQHMHWASSQHTHWPGI. The segment covering 1147–1166 has biased composition (polar residues); sequence WSSSQHMHWASSQHTHWPGI.

Interacts with calmodulin.

Its function is as follows. Essential for spermiogenesis and fertilization. May be required for manchette assembly in elongating spermatids. In Macaca fascicularis (Crab-eating macaque), this protein is IQ domain-containing protein N (IQCN).